Reading from the N-terminus, the 287-residue chain is Elongation factor Ts (287 aa).

Positions 81–84 (TDFV) are involved in Mg(2+) ion dislocation from EF-Tu.

The protein belongs to the EF-Ts family.

Its subcellular location is the cytoplasm. Functionally, associates with the EF-Tu.GDP complex and induces the exchange of GDP to GTP. It remains bound to the aminoacyl-tRNA.EF-Tu.GTP complex up to the GTP hydrolysis stage on the ribosome. This chain is Elongation factor Ts, found in Nitratidesulfovibrio vulgaris (strain ATCC 29579 / DSM 644 / CCUG 34227 / NCIMB 8303 / VKM B-1760 / Hildenborough) (Desulfovibrio vulgaris).